The following is a 405-amino-acid chain: L-carnitine CoA-transferase (405 aa).

The CoA site is built by lysine 97 and arginine 104. Aspartate 169 (nucleophile) is an active-site residue.

Belongs to the CoA-transferase III family. CaiB subfamily. In terms of assembly, homodimer.

It localises to the cytoplasm. It catalyses the reaction crotonobetainyl-CoA + (R)-carnitine = crotonobetaine + (R)-carnitinyl-CoA. It carries out the reaction 4-(trimethylamino)butanoyl-CoA + (R)-carnitine = (R)-carnitinyl-CoA + 4-(trimethylamino)butanoate. Its pathway is amine and polyamine metabolism; carnitine metabolism. Its function is as follows. Catalyzes the reversible transfer of the CoA moiety from gamma-butyrobetainyl-CoA to L-carnitine to generate L-carnitinyl-CoA and gamma-butyrobetaine. Is also able to catalyze the reversible transfer of the CoA moiety from gamma-butyrobetainyl-CoA or L-carnitinyl-CoA to crotonobetaine to generate crotonobetainyl-CoA. The protein is L-carnitine CoA-transferase of Salmonella gallinarum (strain 287/91 / NCTC 13346).